The sequence spans 84 residues: Small ribosomal subunit protein uS17 (84 aa).

Belongs to the universal ribosomal protein uS17 family. Part of the 30S ribosomal subunit.

Its function is as follows. One of the primary rRNA binding proteins, it binds specifically to the 5'-end of 16S ribosomal RNA. The chain is Small ribosomal subunit protein uS17 from Enterobacter sp. (strain 638).